Reading from the N-terminus, the 314-residue chain is tRNA pseudouridine synthase B (314 aa).

D54 acts as the Nucleophile in catalysis.

The protein belongs to the pseudouridine synthase TruB family. Type 1 subfamily.

It catalyses the reaction uridine(55) in tRNA = pseudouridine(55) in tRNA. Functionally, responsible for synthesis of pseudouridine from uracil-55 in the psi GC loop of transfer RNAs. This is tRNA pseudouridine synthase B from Cupriavidus metallidurans (strain ATCC 43123 / DSM 2839 / NBRC 102507 / CH34) (Ralstonia metallidurans).